The following is a 177-amino-acid chain: MNPRRKSRLKVVMAVLSGLAVAVGLTLYALSQNIDLFYTPSEIIYGKNNDPETKPEVGQRIRVGGMVVDGSVKRDDKTLKVTFDLNDIGPAIQVEYEGILPDLFREGQGIVAQGTLVEPTKLKATEVLAKHDENYMPPELGDQMKKQHQPMGISEADLKGKSERDATQISQPFGENK.

Residues Met1–Arg8 are Cytoplasmic-facing. A helical; Signal-anchor for type II membrane protein transmembrane segment spans residues Leu9 to Ala29. The Periplasmic segment spans residues Leu30–Lys177. Residues His131 and Tyr135 each coordinate heme. The tract at residues Asn134–Lys177 is disordered. A compositionally biased stretch (basic and acidic residues) spans Ala156 to Ala166. The span at Thr167–Lys177 shows a compositional bias: polar residues.

This sequence belongs to the CcmE/CycJ family.

The protein resides in the cell inner membrane. Its function is as follows. Heme chaperone required for the biogenesis of c-type cytochromes. Transiently binds heme delivered by CcmC and transfers the heme to apo-cytochromes in a process facilitated by CcmF and CcmH. This Glaesserella parasuis serovar 5 (strain SH0165) (Haemophilus parasuis) protein is Cytochrome c-type biogenesis protein CcmE.